A 433-amino-acid chain; its full sequence is Homogentisate 1,2-dioxygenase (433 aa).

The active-site Proton acceptor is the His288. Residues His331 and Glu337 each contribute to the Fe cation site. Residues Tyr346 and His367 each contribute to the homogentisate site. His367 serves as a coordination point for Fe cation.

This sequence belongs to the homogentisate dioxygenase family. In terms of assembly, hexamer; dimer of trimers. The cofactor is Fe cation.

It catalyses the reaction homogentisate + O2 = 4-maleylacetoacetate + H(+). Its pathway is amino-acid degradation; L-phenylalanine degradation; acetoacetate and fumarate from L-phenylalanine: step 4/6. Functionally, involved in the catabolism of homogentisate (2,5-dihydroxyphenylacetate or 2,5-OH-PhAc), a central intermediate in the degradation of phenylalanine and tyrosine. Catalyzes the oxidative ring cleavage of the aromatic ring of homogentisate to yield maleylacetoacetate. This chain is Homogentisate 1,2-dioxygenase, found in Pseudomonas putida (strain ATCC 700007 / DSM 6899 / JCM 31910 / BCRC 17059 / LMG 24140 / F1).